A 175-amino-acid chain; its full sequence is ATP synthase subunit b (175 aa).

Residues 14–34 form a helical membrane-spanning segment; sequence LSPNPGLIFWTTVSFVIVLLI.

This sequence belongs to the ATPase B chain family. In terms of assembly, F-type ATPases have 2 components, F(1) - the catalytic core - and F(0) - the membrane proton channel. F(1) has five subunits: alpha(3), beta(3), gamma(1), delta(1), epsilon(1). F(0) has four main subunits: a(1), b(2) and c(10-14). The alpha and beta chains form an alternating ring which encloses part of the gamma chain. F(1) is attached to F(0) by a central stalk formed by the gamma and epsilon chains, while a peripheral stalk is formed by the delta and b chains.

The protein localises to the cell inner membrane. F(1)F(0) ATP synthase produces ATP from ADP in the presence of a proton or sodium gradient. F-type ATPases consist of two structural domains, F(1) containing the extramembraneous catalytic core and F(0) containing the membrane proton channel, linked together by a central stalk and a peripheral stalk. During catalysis, ATP synthesis in the catalytic domain of F(1) is coupled via a rotary mechanism of the central stalk subunits to proton translocation. In terms of biological role, component of the F(0) channel, it forms part of the peripheral stalk, linking F(1) to F(0). In Chlorobium phaeobacteroides (strain DSM 266 / SMG 266 / 2430), this protein is ATP synthase subunit b.